The primary structure comprises 155 residues: MSTPTQSLQVKLLDPRFGDLWPLPAHATESSAGMDLRAALEAPMTLQPGDAALIPSGIAIHLADPQLCAVILPRSGLGHRHGIVLGNGTGLIDADYQGPLLISTWNRGREAFTIEPGDRIAQLVILPIVRAGLQVVDTFVDSARGAGGFGHTGVR.

Substrate-binding positions include R74–G76, N87, and L91–D93.

Belongs to the dUTPase family. Mg(2+) is required as a cofactor.

The catalysed reaction is dUTP + H2O = dUMP + diphosphate + H(+). It functions in the pathway pyrimidine metabolism; dUMP biosynthesis; dUMP from dCTP (dUTP route): step 2/2. In terms of biological role, this enzyme is involved in nucleotide metabolism: it produces dUMP, the immediate precursor of thymidine nucleotides and it decreases the intracellular concentration of dUTP so that uracil cannot be incorporated into DNA. The sequence is that of Deoxyuridine 5'-triphosphate nucleotidohydrolase from Xanthomonas oryzae pv. oryzae (strain PXO99A).